The sequence spans 412 residues: Tyrosine--tRNA ligase (412 aa).

Tyr38 is a binding site for L-tyrosine. A 'HIGH' region motif is present at residues 43–52 (CTANSLHIGS). L-tyrosine-binding residues include Tyr170 and Gln174. The 'KMSKS' region signature appears at 230-234 (KMGKT). An ATP-binding site is contributed by Lys233. Residues 343 to 409 (IPISKLLHMW…CGKKRRLKVV (67 aa)) form the S4 RNA-binding domain.

It belongs to the class-I aminoacyl-tRNA synthetase family. TyrS type 1 subfamily. Homodimer.

Its subcellular location is the cytoplasm. The catalysed reaction is tRNA(Tyr) + L-tyrosine + ATP = L-tyrosyl-tRNA(Tyr) + AMP + diphosphate + H(+). Its function is as follows. Catalyzes the attachment of tyrosine to tRNA(Tyr) in a two-step reaction: tyrosine is first activated by ATP to form Tyr-AMP and then transferred to the acceptor end of tRNA(Tyr). The polypeptide is Tyrosine--tRNA ligase (Anaplasma phagocytophilum (strain HZ)).